The chain runs to 189 residues: Methylated-DNA--protein-cysteine methyltransferase (189 aa).

DNA contacts are provided by Tyr128 and Arg142. The Nucleophile; methyl group acceptor role is filled by Cys159. Ser165 is a binding site for DNA.

This sequence belongs to the MGMT family.

The protein localises to the nucleus. The enzyme catalyses a 6-O-methyl-2'-deoxyguanosine in DNA + L-cysteinyl-[protein] = S-methyl-L-cysteinyl-[protein] + a 2'-deoxyguanosine in DNA. It carries out the reaction a 4-O-methyl-thymidine in DNA + L-cysteinyl-[protein] = a thymidine in DNA + S-methyl-L-cysteinyl-[protein]. Its function is as follows. Involved in the cellular defense against the biological effects of O6-methylguanine (O6-MeG) and O4-methylthymine (O4-MeT) in DNA. Repairs the methylated nucleobase in DNA by stoichiometrically transferring the methyl group to a cysteine residue in the enzyme. This is a suicide reaction: the enzyme is irreversibly inactivated. In Kluyveromyces lactis (strain ATCC 8585 / CBS 2359 / DSM 70799 / NBRC 1267 / NRRL Y-1140 / WM37) (Yeast), this protein is Methylated-DNA--protein-cysteine methyltransferase (MGT1).